We begin with the raw amino-acid sequence, 393 residues long: S-adenosylmethionine synthase 4 (393 aa).

Residue glutamate 9 participates in Mg(2+) binding. Histidine 15 contacts ATP. Glutamate 43 provides a ligand contact to K(+). Glutamate 56 and glutamine 99 together coordinate L-methionine. Residues aspartate 167–lysine 169, serine 235–phenylalanine 238, aspartate 246, arginine 252–lysine 253, alanine 269, lysine 273, and lysine 277 each bind ATP. Residue aspartate 246 participates in L-methionine binding. Lysine 277 contributes to the L-methionine binding site.

It belongs to the AdoMet synthase family. Homotetramer. Mn(2+) serves as cofactor. The cofactor is Mg(2+). Requires Co(2+) as cofactor. It depends on K(+) as a cofactor.

It is found in the cytoplasm. It catalyses the reaction L-methionine + ATP + H2O = S-adenosyl-L-methionine + phosphate + diphosphate. It participates in amino-acid biosynthesis; S-adenosyl-L-methionine biosynthesis; S-adenosyl-L-methionine from L-methionine: step 1/1. In terms of biological role, catalyzes the formation of S-adenosylmethionine from methionine and ATP. The reaction comprises two steps that are both catalyzed by the same enzyme: formation of S-adenosylmethionine (AdoMet) and triphosphate, and subsequent hydrolysis of the triphosphate. The sequence is that of S-adenosylmethionine synthase 4 (METK4) from Vitis vinifera (Grape).